Reading from the N-terminus, the 129-residue chain is Ribulose bisphosphate carboxylase small subunit (129 aa).

The protein belongs to the RuBisCO small chain family. As to quaternary structure, heterohexadecamer of 8 large and 8 small subunits.

Functionally, ruBisCO catalyzes two reactions: the carboxylation of D-ribulose 1,5-bisphosphate, the primary event in carbon dioxide fixation, as well as the oxidative fragmentation of the pentose substrate. Both reactions occur simultaneously and in competition at the same active site. Although the small subunit is not catalytic it is essential for maximal activity. This chain is Ribulose bisphosphate carboxylase small subunit, found in Cereibacter sphaeroides (Rhodobacter sphaeroides).